A 417-amino-acid polypeptide reads, in one-letter code: NADH-quinone oxidoreductase subunit D (417 aa).

It belongs to the complex I 49 kDa subunit family. As to quaternary structure, NDH-1 is composed of 14 different subunits. Subunits NuoB, C, D, E, F, and G constitute the peripheral sector of the complex.

It is found in the cell inner membrane. It catalyses the reaction a quinone + NADH + 5 H(+)(in) = a quinol + NAD(+) + 4 H(+)(out). NDH-1 shuttles electrons from NADH, via FMN and iron-sulfur (Fe-S) centers, to quinones in the respiratory chain. The immediate electron acceptor for the enzyme in this species is believed to be ubiquinone. Couples the redox reaction to proton translocation (for every two electrons transferred, four hydrogen ions are translocated across the cytoplasmic membrane), and thus conserves the redox energy in a proton gradient. This Nitrosomonas europaea (strain ATCC 19718 / CIP 103999 / KCTC 2705 / NBRC 14298) protein is NADH-quinone oxidoreductase subunit D.